A 660-amino-acid polypeptide reads, in one-letter code: Poly [ADP-ribose] polymerase 2-A (660 aa).

Residues serine 2–isoleucine 36 enclose the SAP 1 domain. Residues glutamate 40 to glutamate 92 form a disordered region. The Nuclear localization signal signature appears at lysine 69–arginine 75. The SAP 2 domain occupies leucine 91–proline 125. One can recognise a WGR domain in the interval threonine 179–tyrosine 281. The PARP alpha-helical domain occupies glutamate 308–glutamate 426. The PARP catalytic domain occupies aspartate 434 to arginine 660.

The protein belongs to the ARTD/PARP family.

It localises to the nucleus. It catalyses the reaction NAD(+) + (ADP-D-ribosyl)n-acceptor = nicotinamide + (ADP-D-ribosyl)n+1-acceptor + H(+).. The catalysed reaction is L-aspartyl-[protein] + NAD(+) = 4-O-(ADP-D-ribosyl)-L-aspartyl-[protein] + nicotinamide. It carries out the reaction L-glutamyl-[protein] + NAD(+) = 5-O-(ADP-D-ribosyl)-L-glutamyl-[protein] + nicotinamide. Involved in the base excision repair (BER) pathway, by catalyzing the poly(ADP-ribosyl)ation of a limited number of acceptor proteins involved in chromatin architecture and in DNA metabolism. This modification follows DNA damages and appears as an obligatory step in a detection/signaling pathway leading to the reparation of DNA strand breaks. The polypeptide is Poly [ADP-ribose] polymerase 2-A (PARP2-A) (Oryza sativa subsp. japonica (Rice)).